Reading from the N-terminus, the 127-residue chain is Major sperm protein 49 (127 aa).

The residue at position 2 (A2) is an N-acetylalanine. The 118-residue stretch at 9–126 (DIQTQPGTKI…RRKNLPIEYN (118 aa)) folds into the MSP domain.

Sperm.

It localises to the cell projection. Its subcellular location is the pseudopodium. The protein resides in the cytoplasm. The protein localises to the cytoskeleton. Functionally, central component in molecular interactions underlying sperm crawling. Forms an extensive filament system that extends from sperm villipoda, along the leading edge of the pseudopod. The protein is Major sperm protein 49 (msp-49) of Caenorhabditis elegans.